The chain runs to 105 residues: MLYAIVETAGRQYRVEEGKILYTEKQKDYSPGDEIVFDRVVFVRKDGEVLVGKPYVEGAKVVGKVLEHAKARKVKTVKYRPRKNSKVEKGHRQWYTAIKIEKIEL.

It belongs to the bacterial ribosomal protein bL21 family. In terms of assembly, part of the 50S ribosomal subunit. Contacts protein L20.

This protein binds to 23S rRNA in the presence of protein L20. This is Large ribosomal subunit protein bL21 from Thermotoga maritima (strain ATCC 43589 / DSM 3109 / JCM 10099 / NBRC 100826 / MSB8).